Reading from the N-terminus, the 57-residue chain is U17-myrmicitoxin-Tb1a (57 aa).

Residues 1–29 (MEKNRTNIFSVYLMITFLLISIFITMVMS) form the signal peptide. The propeptide occupies 30-33 (DGEA). Residues cysteine 42 and cysteine 53 are joined by a disulfide bond. Alanine amide is present on alanine 56.

Post-translationally, O-glycosylated. As to expression, expressed by the venom gland.

The protein resides in the secreted. Its function is as follows. Serine protease inhibitor which exhibits antifibrinolytic, antielastolytic and antimicrobial activities. Displays antimicrobial activity against bacteria and fungi. Likely functions in the innate immune response to microbial infection and possibly in the venom, as an antifibrinolytic agent. This chain is U17-myrmicitoxin-Tb1a, found in Tetramorium bicarinatum (Tramp ant).